The chain runs to 246 residues: Probable transcriptional regulatory protein CLJ_B3338 (246 aa).

The protein belongs to the TACO1 family.

The protein resides in the cytoplasm. This is Probable transcriptional regulatory protein CLJ_B3338 from Clostridium botulinum (strain 657 / Type Ba4).